A 395-amino-acid polypeptide reads, in one-letter code: Pesticidal crystal protein Cry6Ba (395 aa).

This sequence belongs to the cry6A endotoxin family.

Its function is as follows. Endotoxin with nematicidal activity. The sequence is that of Pesticidal crystal protein Cry6Ba (cry6Ba) from Bacillus thuringiensis.